Reading from the N-terminus, the 238-residue chain is Sugar fermentation stimulation protein homolog (238 aa).

The protein belongs to the SfsA family.

This chain is Sugar fermentation stimulation protein homolog, found in Vibrio parahaemolyticus serotype O3:K6 (strain RIMD 2210633).